We begin with the raw amino-acid sequence, 596 residues long: Elongation factor 4 (596 aa).

One can recognise a tr-type G domain in the interval 2-184; it reads KHIRNFSIIA…EIIAKIPPPV (183 aa). Residues 14-19 and 131-134 each bind GTP; these read DHGKST and NKID.

The protein belongs to the TRAFAC class translation factor GTPase superfamily. Classic translation factor GTPase family. LepA subfamily.

The protein localises to the cell inner membrane. It catalyses the reaction GTP + H2O = GDP + phosphate + H(+). Required for accurate and efficient protein synthesis under certain stress conditions. May act as a fidelity factor of the translation reaction, by catalyzing a one-codon backward translocation of tRNAs on improperly translocated ribosomes. Back-translocation proceeds from a post-translocation (POST) complex to a pre-translocation (PRE) complex, thus giving elongation factor G a second chance to translocate the tRNAs correctly. Binds to ribosomes in a GTP-dependent manner. This chain is Elongation factor 4, found in Shewanella frigidimarina (strain NCIMB 400).